The following is a 2094-amino-acid chain: Nuclear mitotic apparatus protein 1 (2094 aa).

Positions 1 to 210 (MTLHATRAAT…SPMGDILQTP (210 aa)) are head (Globular). At Ser160 the chain carries Phosphoserine. Thr161 is subject to Phosphothreonine. Phosphoserine is present on residues Ser167 and Ser201. Thr209 is modified (phosphothreonine). Residues 211–1681 (QFQMRRLKKQ…ADQQLRDLGK (1471 aa)) adopt a coiled-coil conformation. Residue Ser269 is modified to Phosphoserine. Lys377 carries the N6-acetyllysine modification. Residues Ser386 and Ser398 each carry the phosphoserine modification. Lys443 is modified (N6-acetyllysine). Disordered stretches follow at residues 617-636 (QLQA…TQAQ) and 723-759 (LKEQ…AGRK). Over residues 627–636 (NAQTSVTQAQ) the composition is skewed to polar residues. Lys878 carries the N6-acetyllysine modification. 3 disordered regions span residues 921 to 1000 (SLEL…TQER), 1081 to 1143 (LVKK…EGLT), and 1173 to 1223 (ELGH…SSLI). Residues 935–951 (ASDQLGEQQGRPFSSTH) are compositionally biased toward polar residues. Composition is skewed to basic and acidic residues over residues 956 to 972 (AMER…ERLR) and 983 to 998 (QEER…RLTQ). Ser1183 carries the post-translational modification Phosphoserine. Residues 1194 to 1206 (KAQDHSKAEEEWK) show a composition bias toward basic and acidic residues. Phosphoserine is present on Ser1221. Lys1507 is modified (N6-acetyllysine). At Ser1583 the chain carries Phosphoserine. Lys1681 participates in a covalent cross-link: Glycyl lysine isopeptide (Lys-Gly) (interchain with G-Cter in SUMO2). The membrane-binding domain 1 stretch occupies residues 1681 to 1858 (KFQVATDALK…NSALLSLPGY (178 aa)). The segment at 1682–2094 (FQVATDALKS…TPRAKGKVKH (413 aa)) is tail (Globular). 3 positions are modified to phosphoserine: Ser1703, Ser1706, and Ser1710. Positions 1718–1743 (SVASKLPRTQPDGTSVPGEPASPISQ) are disordered. Positions 1724–1730 (PRTQPDG) match the Tankyrase-binding domain motif. 2 positions are modified to phosphoserine: Ser1739 and Ser1742. Lys1748 participates in a covalent cross-link: Glycyl lysine isopeptide (Lys-Gly) (interchain with G-Cter in SUMO1); alternate. Lys1748 participates in a covalent cross-link: Glycyl lysine isopeptide (Lys-Gly) (interchain with G-Cter in SUMO2); alternate. A Phosphoserine modification is found at Ser1751. Ser1754 bears the Phosphoserine; by PLK1 mark. Tyr1756 is subject to Phosphotyrosine. Thr1758 carries the phosphothreonine modification. The tract at residues 1760-1795 (TPARGQAPLETSLDSLGDAFPDSGRKTRSARRRTTQ) is disordered. Positions 1770-1792 (TSLDSLGDAFPDSGRKTRSARRR) are 4.1-binding domain. Ser1771 is modified (phosphoserine; by PLK1). Residues Ser1774 and Ser1782 each carry the phosphoserine modification. Position 1786 is a phosphothreonine (Thr1786). A Glycyl lysine isopeptide (Lys-Gly) (interchain with G-Cter in SUMO2) cross-link involves residue Lys1804. Disordered stretches follow at residues 1807–1883 (LEEP…GRNS) and 1937–2094 (EMKT…KVKH). Ser1812 and Ser1815 each carry phosphoserine. The span at 1812 to 1839 (SANSSFYSTQSAPASQANLRATSSTQSL) shows a compositional bias: polar residues. Ser1816 carries the phosphoserine; by PLK1 modification. Position 1818 is a phosphotyrosine (Tyr1818). Ser1822 is subject to Phosphoserine. At Ser1826 the chain carries Phosphoserine; alternate. An O-linked (GlcNAc) serine; alternate glycan is attached at Ser1826. Phosphoserine occurs at positions 1844 and 1869. The interval 1864–1967 (SSARRSQARM…AEGVGITTRQ (104 aa)) is tubulin-binding domain. Residues 1874–1908 (SSGAPQGRNSFYMGTCQDEPEQLDDWNRIAELQQR) form a GPSM2-binding domain region. Over residues 1937 to 1948 (EMKTGDPRETLR) the composition is skewed to basic and acidic residues. A Phosphoserine modification is found at Ser1951. The interval 1963 to 2042 (ITTRQQRKRV…SILNTPKKLG (80 aa)) is membrane-binding domain 2. A Nuclear localization signal motif is present at residues 1966 to 1971 (RQQRKR). Phosphoserine occurs at positions 1973 and 1974. Thr1982 is modified (phosphothreonine). A Phosphoserine modification is found at Ser1985. Position 1997 is a phosphothreonine; by CDK1 (Thr1997). Over residues 1997–2006 (TPRDRHEGRK) the composition is skewed to basic and acidic residues. Residue Ser2029 is modified to Phosphoserine. Position 2037 is a phosphothreonine (Thr2037). 2 positions are modified to phosphoserine: Ser2044 and Ser2059. Residue Ser2069 is modified to Phosphoserine; by CDK1. Positions 2073–2085 (ATTTTGTATVATT) are enriched in low complexity. Thr2085 carries the post-translational modification Phosphothreonine; by CDK1.

As to quaternary structure, homodimer. Also forms multiarm oligomers by association of C-terminal tail domains, oligomers may further assemble to form a hexagonal nuclear lattice-like network. Associates with the dynein-dynactin complex; this association promotes the transport and accumulation of NUMA1 at the mitotic spindle poles that is inhibited by the BRISC complex in a PLK1-dependent manner. Part of a spindle orientation complex at least composed of GNAI1, GPSM2 and NUMA1. Interacts (via C-terminus) with microtubules (MTs); this interaction is direct and promotes both MT bundle formation and stability in a dynein-dynactin complex- and CDK1-independent manner. Interacts with EPB41 and EPB41L2; these interactions are negatively regulated by CDK1 during metaphase and are important for anaphase-specific localization of NUMA1 in symmetrically dividing cells. Interacts (via C-terminus) with GPSM2 (via TPR repeats); this interaction is direct, prevented by competitive binding of INSC, is inhibited in a PLK1-dependent manner, blocks the association of NUMA1 with MTs and inhibits NUMA1-induced MT bundle formation, prevents the association of NUMA1 with SPAG5, induces mitotic spindle pole localization of GPSM2, both metaphase cell cortex localization of NUMA1 and mitotic spindle organization. Does not interact with GPSM2 during anaphase. Interacts (via C-terminus) with the nuclear importin alpha/importin beta receptor; this interaction is inhibited by RanGTP. Interacts (via C-terminus) with KPNB1; this interaction is inhibited by RanGTP and the BRISC complex. Interacts with ABRAXAS2 and the BRISC complex; these interactions regulate mitotic spindle assembly. Interacts (via N-terminal end of the coiled-coil domain) with RAE1; this interaction promotes mitotic spindle formation. Interacts (via C-terminus) with SPAG5 (via C-terminus); this interaction promotes the recruitment of SPAG5 to the MTs at spindle poles in a dynein-dynactin-dependent manner and regulates mitotic spindle organization and proper chromosome alignment during mitosis. Interacts with TNKS; this interaction occurs at the onset of mitosis. Interacts with TNKS2. Interacts with tubulin. Interacts with KHDC3 (via C-terminus). Post-translationally, phosphorylation and dephosphorylation on Thr-2037 regulates the extent of cortical NUMA1 and the dynein-dynactin complex localization during mitotic metaphase and anaphase. In metaphase, phosphorylation on Thr-2037 occurs in a kinase CDK1-dependent manner; this phosphorylation maintains low levels of cortical dynein-dynactin complex at metaphase, and hence proper spindle positioning. In anaphase, dephosphorylated on Thr-2037 by phosphatase PPP2CA; this dephosphorylation stimulates its membrane association and with the dynein-dynactin complex its enrichment at the cell cortex, and hence robust spindle elongation. Probably also phosphorylated on Thr-1997 and Ser-2069 by CDK1; these phosphorylations may regulate its cell cortex recruitment during metaphase and anaphase. Phosphorylated on Ser-1751, Ser-1754, Ser-1771 and Ser-1816 by PLK1; these phosphorylations induce cortical dynein-dynactin complex dissociation from the NUMA1-GPSM2 complex and negatively regulates cortical dynein-dynactin complex localization. ADP-ribosylated by TNKS at the onset of mitosis; ADP-ribosylation is not required for its localization to spindle poles. In terms of processing, O-glycosylated during cytokinesis at sites identical or close to phosphorylation sites, this interferes with the phosphorylation status. Post-translationally, ubiquitinated with 'Lys-63'-linked polyubiquitin chains. Deubiquitination by the BRISC complex is important for the incorporation of NUMA1 into mitotic spindle poles and normal spindle pole function, probably by modulating interactions between NUMA1, dynein-dynactin complex and importin-beta. In terms of tissue distribution, expressed in testis, speen, liver, lung, spinal cord and brain. Expressed in Purkinje neurons (at protein level).

It localises to the nucleus. The protein resides in the nucleoplasm. It is found in the nucleus matrix. The protein localises to the chromosome. Its subcellular location is the cytoplasm. It localises to the cytoskeleton. The protein resides in the microtubule organizing center. It is found in the centrosome. The protein localises to the spindle pole. Its subcellular location is the cell cortex. It localises to the cell membrane. The protein resides in the lateral cell membrane. Microtubule (MT)-binding protein that plays a role in the formation and maintenance of the spindle poles and the alignement and the segregation of chromosomes during mitotic cell division. Functions to tether the minus ends of MTs at the spindle poles, which is critical for the establishment and maintenance of the spindle poles. Plays a role in the establishment of the mitotic spindle orientation during metaphase and elongation during anaphase in a dynein-dynactin-dependent manner. In metaphase, part of a ternary complex composed of GPSM2 and G(i) alpha proteins, that regulates the recruitment and anchorage of the dynein-dynactin complex in the mitotic cell cortex regions situated above the two spindle poles, and hence regulates the correct oritentation of the mitotic spindle. During anaphase, mediates the recruitment and accumulation of the dynein-dynactin complex at the cell membrane of the polar cortical region through direct association with phosphatidylinositol 4,5-bisphosphate (PI(4,5)P2), and hence participates in the regulation of the spindle elongation and chromosome segregation. Also binds to other polyanionic phosphoinositides, such as phosphatidylinositol 3-phosphate (PIP), lysophosphatidic acid (LPA) and phosphatidylinositol triphosphate (PIP3), in vitro. Also required for proper orientation of the mitotic spindle during asymmetric cell divisions. Plays a role in mitotic MT aster assembly. Involved in anastral spindle assembly. Positively regulates TNKS protein localization to spindle poles in mitosis. Highly abundant component of the nuclear matrix where it may serve a non-mitotic structural role, occupies the majority of the nuclear volume. Required for epidermal differentiation and hair follicle morphogenesis. The protein is Nuclear mitotic apparatus protein 1 of Mus musculus (Mouse).